A 130-amino-acid polypeptide reads, in one-letter code: Small ribosomal subunit protein uS11 (130 aa).

It belongs to the universal ribosomal protein uS11 family. As to quaternary structure, part of the 30S ribosomal subunit. Interacts with proteins S7 and S18. Binds to IF-3.

Its function is as follows. Located on the platform of the 30S subunit, it bridges several disparate RNA helices of the 16S rRNA. Forms part of the Shine-Dalgarno cleft in the 70S ribosome. This Shewanella sediminis (strain HAW-EB3) protein is Small ribosomal subunit protein uS11.